The primary structure comprises 238 residues: Succinate dehydrogenase iron-sulfur subunit (238 aa).

One can recognise a 2Fe-2S ferredoxin-type domain in the interval 1–97 (MKLEFSIYRY…KIVIRPLPGL (97 aa)). Residues C55, C60, and C75 each contribute to the [2Fe-2S] cluster site. The region spanning 139–169 (QREKLDGLYECILCACCSTSCPSFWWNPDKF) is the 4Fe-4S ferredoxin-type domain. [4Fe-4S] cluster is bound by residues C149, C152, and C155. C159 is a binding site for [3Fe-4S] cluster. W164 provides a ligand contact to a ubiquinone. [3Fe-4S] cluster contacts are provided by C206 and C212. C216 is a [4Fe-4S] cluster binding site.

This sequence belongs to the succinate dehydrogenase/fumarate reductase iron-sulfur protein family. As to quaternary structure, part of an enzyme complex containing four subunits: a flavoprotein, an iron-sulfur, cytochrome b-556, and a hydrophobic anchor protein. [2Fe-2S] cluster is required as a cofactor. [3Fe-4S] cluster serves as cofactor. Requires [4Fe-4S] cluster as cofactor.

It catalyses the reaction a quinone + succinate = fumarate + a quinol. It participates in carbohydrate metabolism; tricarboxylic acid cycle; fumarate from succinate (bacterial route): step 1/1. Two distinct, membrane-bound, FAD-containing enzymes are responsible for the catalysis of fumarate and succinate interconversion; the fumarate reductase is used in anaerobic growth, and the succinate dehydrogenase is used in aerobic growth. In Salmonella typhimurium (strain LT2 / SGSC1412 / ATCC 700720), this protein is Succinate dehydrogenase iron-sulfur subunit (sdhB).